Reading from the N-terminus, the 232-residue chain is Phosphoribosylformylglycinamidine synthase subunit PurQ (232 aa).

Residues lysine 2–phenylalanine 232 enclose the Glutamine amidotransferase type-1 domain. Cysteine 86 functions as the Nucleophile in the catalytic mechanism. Residues histidine 203 and glutamate 205 contribute to the active site.

Part of the FGAM synthase complex composed of 1 PurL, 1 PurQ and 2 PurS subunits.

The protein localises to the cytoplasm. It carries out the reaction N(2)-formyl-N(1)-(5-phospho-beta-D-ribosyl)glycinamide + L-glutamine + ATP + H2O = 2-formamido-N(1)-(5-O-phospho-beta-D-ribosyl)acetamidine + L-glutamate + ADP + phosphate + H(+). It catalyses the reaction L-glutamine + H2O = L-glutamate + NH4(+). It functions in the pathway purine metabolism; IMP biosynthesis via de novo pathway; 5-amino-1-(5-phospho-D-ribosyl)imidazole from N(2)-formyl-N(1)-(5-phospho-D-ribosyl)glycinamide: step 1/2. Its function is as follows. Part of the phosphoribosylformylglycinamidine synthase complex involved in the purines biosynthetic pathway. Catalyzes the ATP-dependent conversion of formylglycinamide ribonucleotide (FGAR) and glutamine to yield formylglycinamidine ribonucleotide (FGAM) and glutamate. The FGAM synthase complex is composed of three subunits. PurQ produces an ammonia molecule by converting glutamine to glutamate. PurL transfers the ammonia molecule to FGAR to form FGAM in an ATP-dependent manner. PurS interacts with PurQ and PurL and is thought to assist in the transfer of the ammonia molecule from PurQ to PurL. The sequence is that of Phosphoribosylformylglycinamidine synthase subunit PurQ from Methanosarcina mazei (strain ATCC BAA-159 / DSM 3647 / Goe1 / Go1 / JCM 11833 / OCM 88) (Methanosarcina frisia).